We begin with the raw amino-acid sequence, 226 residues long: UPF0758 protein LL1007 (226 aa).

The MPN domain maps to 103–225; that stretch reads QVLSSREYGL…YFSFREEEIR (123 aa). Residues histidine 174, histidine 176, and aspartate 187 each coordinate Zn(2+). The short motif at 174–187 is the JAMM motif element; that stretch reads HNHPSGNLKPSQAD.

The protein belongs to the UPF0758 family.

The polypeptide is UPF0758 protein LL1007 (Lactococcus lactis subsp. lactis (strain IL1403) (Streptococcus lactis)).